Consider the following 432-residue polypeptide: GTPase Obg (432 aa).

An Obg domain is found at 1–159; sequence MKFIDTAKFT…YEVKAELKVL (159 aa). The OBG-type G domain occupies 160 to 332; it reads ADVGFVGLPN…LLLKIAKELE (173 aa). GTP contacts are provided by residues 166–173, 191–195, 213–216, 284–287, and 313–315; these read GLPNAGKS, FTTLN, DLPG, NKMD, and SGL. Residues serine 173 and threonine 193 each coordinate Mg(2+). The 79-residue stretch at 354–432 folds into the OCT domain; sequence RLEEDEEDIQ…VFEYELEWMD (79 aa).

The protein belongs to the TRAFAC class OBG-HflX-like GTPase superfamily. OBG GTPase family. In terms of assembly, monomer. It depends on Mg(2+) as a cofactor.

The protein resides in the cytoplasm. In terms of biological role, an essential GTPase which binds GTP, GDP and possibly (p)ppGpp with moderate affinity, with high nucleotide exchange rates and a fairly low GTP hydrolysis rate. Plays a role in control of the cell cycle, stress response, ribosome biogenesis and in those bacteria that undergo differentiation, in morphogenesis control. The protein is GTPase Obg of Mesoplasma florum (strain ATCC 33453 / NBRC 100688 / NCTC 11704 / L1) (Acholeplasma florum).